The following is a 552-amino-acid chain: Non-structural protein NS1 (552 aa).

The protein belongs to the orbivirus non-structural protein NS1 family.

This chain is Non-structural protein NS1 (Segment-5), found in Antilocapra americana (Pronghorn).